A 716-amino-acid polypeptide reads, in one-letter code: Exocyst complex component 8 (716 aa).

Serine 15 carries the phosphoserine modification. Residues 129–150 are disordered; the sequence is GFLPGPAGVPREGSGTGEEGKQ. Residues 173-273 form the PH domain; that stretch reads YLVYNGDLVE…WLEVLEETKR (101 aa). Positions 275-284 are enriched in basic and acidic residues; it reads LSDKRRREQE. A disordered region spans residues 275-319; the sequence is LSDKRRREQEEAAAPRAPPPVTSKGSNPFEDEDDEELATPEAEEE. A compositionally biased stretch (acidic residues) spans 303–319; the sequence is FEDEDDEELATPEAEEE. Threonine 313 carries the post-translational modification Phosphothreonine.

It belongs to the EXO84 family. As to quaternary structure, the exocyst complex is composed of EXOC1, EXOC2, EXOC3, EXOC4, EXOC5, EXOC6, EXOC7 and EXOC8. Interacts (via PH domain) with GTP-bound RALA and RALB. Interacts with SH3BP1; required for the localization of both SH3BP1 and the exocyst to the leading edge of migrating cells.

It is found in the cytoplasm. Its subcellular location is the perinuclear region. The protein resides in the cell projection. It localises to the growth cone. Its function is as follows. Component of the exocyst complex involved in the docking of exocytic vesicles with fusion sites on the plasma membrane. This chain is Exocyst complex component 8 (Exoc8), found in Mus musculus (Mouse).